The chain runs to 444 residues: UDP-N-acetylmuramate--L-alanine ligase (444 aa).

G110 to S116 serves as a coordination point for ATP.

The protein belongs to the MurCDEF family. Post-translationally, phosphorylated by StkP in vitro. Dephosphorylated by PhpP in vitro.

It is found in the cytoplasm. It carries out the reaction UDP-N-acetyl-alpha-D-muramate + L-alanine + ATP = UDP-N-acetyl-alpha-D-muramoyl-L-alanine + ADP + phosphate + H(+). The protein operates within cell wall biogenesis; peptidoglycan biosynthesis. Cell wall formation. The chain is UDP-N-acetylmuramate--L-alanine ligase from Streptococcus pneumoniae serotype 4 (strain ATCC BAA-334 / TIGR4).